We begin with the raw amino-acid sequence, 272 residues long: Undecaprenyl-diphosphatase (272 aa).

7 helical membrane passes run 6–26, 45–65, 92–112, 115–135, 189–209, 225–245, and 251–271; these read SLLIAFILGVVEGLTEFLPVS, AKTFEVIIQLGSILAVVVMFW, THILLAMIPAVVLGLVFHDVI, LFYPQNVMYALVVGGFLLLAA, YAASEFSFILAVPMMMGATVL, MFAVGFVTAFLVALIAIKTFL, and ISFVPFAIYRFIVAGVVYMVF.

The protein belongs to the UppP family.

It localises to the cell inner membrane. It catalyses the reaction di-trans,octa-cis-undecaprenyl diphosphate + H2O = di-trans,octa-cis-undecaprenyl phosphate + phosphate + H(+). Functionally, catalyzes the dephosphorylation of undecaprenyl diphosphate (UPP). Confers resistance to bacitracin. In Pectobacterium carotovorum subsp. carotovorum (strain PC1), this protein is Undecaprenyl-diphosphatase.